We begin with the raw amino-acid sequence, 439 residues long: Serine/threonine-protein kinase 2 (439 aa).

A Protein kinase domain is found at 87 to 439 (NDDFYHISTG…IFSDWINGGN (353 aa)). Residues 93–101 (ISTGGYGIV) and K117 contribute to the ATP site. The active-site Proton acceptor is D307.

It belongs to the protein kinase superfamily. Ser/Thr protein kinase family. Phosphorylated in vivo. Autophosphorylated in vitro.

The protein localises to the host endoplasmic reticulum. The protein resides in the host endoplasmic reticulum-Golgi intermediate compartment. It catalyses the reaction L-seryl-[protein] + ATP = O-phospho-L-seryl-[protein] + ADP + H(+). It carries out the reaction L-threonyl-[protein] + ATP = O-phospho-L-threonyl-[protein] + ADP + H(+). Essential serine-protein kinase involved in the early stage of virion morphogenesis. This chain is Serine/threonine-protein kinase 2 (OPG054), found in Vaccinia virus (strain Tian Tan) (VACV).